The sequence spans 382 residues: Histidinol-phosphate aminotransferase (382 aa).

Residues 1 to 24 (MTSAPRPRPTLDDLPLREDLRGKS) are disordered. Residues 9 to 22 (PTLDDLPLREDLRG) show a composition bias toward basic and acidic residues. Lys233 carries the N6-(pyridoxal phosphate)lysine modification.

The protein belongs to the class-II pyridoxal-phosphate-dependent aminotransferase family. Histidinol-phosphate aminotransferase subfamily. As to quaternary structure, homodimer. Requires pyridoxal 5'-phosphate as cofactor.

The catalysed reaction is L-histidinol phosphate + 2-oxoglutarate = 3-(imidazol-4-yl)-2-oxopropyl phosphate + L-glutamate. The protein operates within amino-acid biosynthesis; L-histidine biosynthesis; L-histidine from 5-phospho-alpha-D-ribose 1-diphosphate: step 7/9. This Mycobacterium ulcerans (strain Agy99) protein is Histidinol-phosphate aminotransferase.